Reading from the N-terminus, the 202-residue chain is Probable cobalt-precorrin-6B C(15)-methyltransferase (decarboxylating) (202 aa).

Residues Thr-29, 53–57, Asp-77, and Val-106 each bind S-adenosyl-L-methionine; that span reads GCGSG.

This sequence belongs to the methyltransferase superfamily. Archaeal-type CbiT family.

It carries out the reaction Co-precorrin-6B + S-adenosyl-L-methionine = Co-precorrin-7 + S-adenosyl-L-homocysteine + CO2. It participates in cofactor biosynthesis; adenosylcobalamin biosynthesis; cob(II)yrinate a,c-diamide from sirohydrochlorin (anaerobic route): step 8/10. Its function is as follows. Catalyzes the methylation of C-15 in cobalt-precorrin-6B followed by the decarboxylation of C-12 to form cobalt-precorrin-7. The polypeptide is Probable cobalt-precorrin-6B C(15)-methyltransferase (decarboxylating) (Thermoplasma acidophilum (strain ATCC 25905 / DSM 1728 / JCM 9062 / NBRC 15155 / AMRC-C165)).